A 444-amino-acid chain; its full sequence is tRNA-2-methylthio-N(6)-dimethylallyladenosine synthase (444 aa).

The region spanning 2–119 (KKLYIRTFGC…LPSMLNEVLT (118 aa)) is the MTTase N-terminal domain. [4Fe-4S] cluster-binding residues include C11, C48, C82, C161, C165, and C168. The Radical SAM core domain maps to 147-379 (KTSSVTAFVS…QKTIDKNTER (233 aa)). The TRAM domain maps to 382 to 444 (KSMVGSVQKI…GNSLVGNLIA (63 aa)).

It belongs to the methylthiotransferase family. MiaB subfamily. Monomer. [4Fe-4S] cluster serves as cofactor.

It is found in the cytoplasm. It catalyses the reaction N(6)-dimethylallyladenosine(37) in tRNA + (sulfur carrier)-SH + AH2 + 2 S-adenosyl-L-methionine = 2-methylsulfanyl-N(6)-dimethylallyladenosine(37) in tRNA + (sulfur carrier)-H + 5'-deoxyadenosine + L-methionine + A + S-adenosyl-L-homocysteine + 2 H(+). In terms of biological role, catalyzes the methylthiolation of N6-(dimethylallyl)adenosine (i(6)A), leading to the formation of 2-methylthio-N6-(dimethylallyl)adenosine (ms(2)i(6)A) at position 37 in tRNAs that read codons beginning with uridine. The sequence is that of tRNA-2-methylthio-N(6)-dimethylallyladenosine synthase from Ruthia magnifica subsp. Calyptogena magnifica.